The chain runs to 230 residues: Large ribosomal subunit protein uL1 (230 aa).

This sequence belongs to the universal ribosomal protein uL1 family. As to quaternary structure, part of the 50S ribosomal subunit.

Its function is as follows. Binds directly to 23S rRNA. The L1 stalk is quite mobile in the ribosome, and is involved in E site tRNA release. In terms of biological role, protein L1 is also a translational repressor protein, it controls the translation of the L11 operon by binding to its mRNA. This Bradyrhizobium diazoefficiens (strain JCM 10833 / BCRC 13528 / IAM 13628 / NBRC 14792 / USDA 110) protein is Large ribosomal subunit protein uL1.